Here is a 123-residue protein sequence, read N- to C-terminus: UPF0738 protein BCE_1319 (123 aa).

This sequence belongs to the UPF0738 family.

In Bacillus cereus (strain ATCC 10987 / NRS 248), this protein is UPF0738 protein BCE_1319.